An 820-amino-acid chain; its full sequence is Probable ATP-dependent RNA helicase DDX23 (820 aa).

Over residues 1–42 (MAGELADKKDRDASPSKEERKRSRTPDRERDRDRDRKSSPSK) the composition is skewed to basic and acidic residues. The disordered stretch occupies residues 1–244 (MAGELADKKD…QKIREEKDKS (244 aa)). Phosphoserine occurs at positions 14 and 16. The segment covering 43-65 (DRKRHRSRDRRRGGSRSRSRSRS) has biased composition (basic residues). A compositionally biased stretch (basic and acidic residues) spans 66 to 105 (KSAERERRHKERERDKERDRNKKDRDRDKDGHRRDKDRKR). Serine 107 and serine 109 each carry phosphoserine. Composition is skewed to basic and acidic residues over residues 112–137 (RGKD…DKKP), 147–226 (LLAK…RETN), and 233–244 (GRQKIREEKDKS). Positions 391 to 419 (RSWKDSSLPPHILEVIDKCGYKEPTPIQR) match the Q motif motif. Residues 422–627 (IPIGLQNRDI…RSYLRRPAVV (206 aa)) enclose the Helicase ATP-binding domain. 435 to 442 (AETGSGKT) contacts ATP. Residues 549–552 (DEAD) carry the DEAD box motif. One can recognise a Helicase C-terminal domain in the interval 651-799 (KRKKLLAILE…SCPPELANHP (149 aa)). Residues lysine 686 and lysine 811 each participate in a glycyl lysine isopeptide (Lys-Gly) (interchain with G-Cter in SUMO2) cross-link.

Belongs to the DEAD box helicase family. DDX23/PRP28 subfamily. As to quaternary structure, the phosphorylated form (by SRPK2) is a component of the U4/U6-U5 tri-snRNP complex composed of the U4, U6 and U5 snRNAs and at least PRPF3, PRPF4, PRPF6, PRPF8, PRPF31, SNRNP200, TXNL4A, WDR57, SNRNP40, DDX23, CD2BP2, PPIH, SNU13, EFTUD2, SART1 and USP39. Identified in the spliceosome C complex. Interacts with ERBB4. Interacts with ERCC6. In terms of processing, in vitro phosphorylated by CLK1 and U1 snRNP-associated protein kinase. Phosphorylated by SRPK2 and this phosphorylation is required for its association with the tri-snRNP (U4/U6-U5 tri-small nuclear ribonucleoproteins) and subsequent spliceosomal B complex formation. May be phosphorylated by SRPK2 on Ser residues in the SR domain; the phosphorylation is required for the removal of inappropriate R-loops during transcription.

Its subcellular location is the nucleus. The protein resides in the chromosome. It catalyses the reaction ATP + H2O = ADP + phosphate + H(+). Functionally, involved in pre-mRNA splicing and its phosphorylated form (by SRPK2) is required for spliceosomal B complex formation. Independently of its spliceosome formation function, required for the suppression of incorrect R-loops formed during transcription; R-loops are composed of a DNA:RNA hybrid and the associated non-template single-stranded DNA. The chain is Probable ATP-dependent RNA helicase DDX23 from Homo sapiens (Human).